A 159-amino-acid polypeptide reads, in one-letter code: Ribosomal RNA large subunit methyltransferase H (159 aa).

S-adenosyl-L-methionine-binding positions include Leu76, Gly108, and 127 to 132 (FSPMTF).

Belongs to the RNA methyltransferase RlmH family. In terms of assembly, homodimer.

The protein resides in the cytoplasm. It carries out the reaction pseudouridine(1915) in 23S rRNA + S-adenosyl-L-methionine = N(3)-methylpseudouridine(1915) in 23S rRNA + S-adenosyl-L-homocysteine + H(+). Its function is as follows. Specifically methylates the pseudouridine at position 1915 (m3Psi1915) in 23S rRNA. The polypeptide is Ribosomal RNA large subunit methyltransferase H (Alkaliphilus oremlandii (strain OhILAs) (Clostridium oremlandii (strain OhILAs))).